The primary structure comprises 295 residues: Hydroxylase/desaturase efuI (295 aa).

This sequence belongs to the asaB hydroxylase/desaturase family.

It participates in secondary metabolite biosynthesis; terpenoid biosynthesis. Its function is as follows. Hydroxylase/desaturase; part of the gene cluster that mediates the biosynthesis of enfumafungin, a glycosylated fernene-type triterpenoid with potent antifungal activity, mediated by its interaction with beta-1,3-glucan synthase and the fungal cell wall. The pathway begins with the terpene cyclase-glycosyl transferase fusion protein that most likely uses 2,3-oxidosqualene as substrate and catalyzes glycosylation immediately after cyclization. The fernene glycoside then could be processed by the desaturase efuI which catalyzes isomerization of a double bond established by efuA to form the core structure. The latter would then undergo a series of hydroxylations in unknown order at C-2, C-19, C-23 and C-25, which would be catalyzed by two of the three cytochrome P450 monooxygenases efuB, efuG or efuH. The hydroxy-group at C-25 becomes oxidized by the dehydrogenase efuE to enable a spontaneous, non-enzymatic hemiacetal formation with C-23. After hydroxylation at C-2, acetylation by the acetyltransferase efuC takes place. The final steps in enfumafungin biosynthesis require expansion of the 5-membered ring by lactonization via a Baeyer-Villiger reaction mediated by one of the BGC's cytochrome P450 monooxygenases (efuB, efuG or efuH) followed by ring cleavage. This type of reaction would establish a double bond between C-20 and C-21 which could be reduced by the reductase efuL to form the final product. The sequence is that of Hydroxylase/desaturase efuI from Hormonema carpetanum.